Here is a 349-residue protein sequence, read N- to C-terminus: MQSHAGGSRAPLGLLLICLCLPGLFARSTGAPEEKASPHSGQPSFTSLLNPGQPQPKPDPVNNELLGVLPRLSESPQDGALPEGGSEVPNGPPFWGPPPMESWPSEDPQQGMAAVAEDQLEQMLPEALPYLSRGGRLPEASSARLRQPSLAASYPQDSEAGLQPGSSSLETEAEAFARSPFWFLIHKLLPGSSGRILRPGTSWGSGGAGTGWGTRPMPYPSGIWGSNGLVSGTSLGGRGPYPVRIWGRNGWYPLRILGGNGRYPPVGTWGGYGQYPPVGTWGGYGQYPPVGPWGGYGQYPPVGTWGANCQYPAGSRRPNCRYPAGSWGTKGQNRLPPGAKRPGSSGITP.

The first 26 residues, Met1–Ala26, serve as a signal peptide directing secretion. Disordered regions lie at residues Gly30–Ala113 and Tyr322–Pro349. Residues His39–Gly52 are compositionally biased toward polar residues. Residues Asn90–Glu101 are compositionally biased toward pro residues.

Binds to numerous extracellular matrix proteins.

The protein resides in the secreted. The protein localises to the extracellular space. Its subcellular location is the extracellular matrix. This is an uncharacterized protein from Mus musculus (Mouse).